Reading from the N-terminus, the 483-residue chain is tRNA-2-methylthio-N(6)-dimethylallyladenosine synthase (483 aa).

An MTTase N-terminal domain is found at 31 to 148 (KKLYIETQGC…LPQMLDQHQD (118 aa)). [4Fe-4S] cluster is bound by residues cysteine 40, cysteine 77, cysteine 111, cysteine 192, cysteine 196, and cysteine 199. In terms of domain architecture, Radical SAM core spans 178 to 410 (RVEGFKAFVS…QHWIKQSSIR (233 aa)). The 65-residue stretch at 413-477 (DAMQGTIQRV…LNLVYGELLN (65 aa)) folds into the TRAM domain.

The protein belongs to the methylthiotransferase family. MiaB subfamily. As to quaternary structure, monomer. [4Fe-4S] cluster serves as cofactor.

It is found in the cytoplasm. It catalyses the reaction N(6)-dimethylallyladenosine(37) in tRNA + (sulfur carrier)-SH + AH2 + 2 S-adenosyl-L-methionine = 2-methylsulfanyl-N(6)-dimethylallyladenosine(37) in tRNA + (sulfur carrier)-H + 5'-deoxyadenosine + L-methionine + A + S-adenosyl-L-homocysteine + 2 H(+). Functionally, catalyzes the methylthiolation of N6-(dimethylallyl)adenosine (i(6)A), leading to the formation of 2-methylthio-N6-(dimethylallyl)adenosine (ms(2)i(6)A) at position 37 in tRNAs that read codons beginning with uridine. This chain is tRNA-2-methylthio-N(6)-dimethylallyladenosine synthase, found in Acinetobacter baylyi (strain ATCC 33305 / BD413 / ADP1).